The chain runs to 82 residues: Probable acyl carrier protein IacP (82 aa).

The 76-residue stretch at 3–78 (MDIEARVKKV…DICRVVKKSL (76 aa)) folds into the Carrier domain. Serine 38 is modified (O-(pantetheine 4'-phosphoryl)serine).

4'-phosphopantetheine is transferred from CoA to a specific serine of apo-IacP.

Its subcellular location is the cytoplasm. Functionally, acyl carrier protein. The sequence is that of Probable acyl carrier protein IacP (iacP) from Salmonella typhimurium (strain SL1344).